Here is a 307-residue protein sequence, read N- to C-terminus: Nicotinamide/nicotinic acid mononucleotide adenylyltransferase 2 (307 aa).

2 residues coordinate NAD(+): Ser-16 and Phe-17. Residue His-24 coordinates ATP. Trp-92 and Thr-95 together coordinate NAD(+). 2 S-palmitoyl cysteine lipidation sites follow: Cys-164 and Cys-165. NAD(+) is bound by residues Gly-200, Asp-202, Leu-212, Trp-213, and Arg-232. 271 to 274 (TKSR) serves as a coordination point for ATP.

Belongs to the eukaryotic NMN adenylyltransferase family. In terms of assembly, monomer. Mg(2+) serves as cofactor. Degraded in response to injured neurite. Degradation is caused by polyubiquitination by MYCBP2 after recognition by FBXO45. Post-translationally, palmitoylated; palmitoylation is required for membrane association.

It localises to the golgi apparatus membrane. The protein resides in the cytoplasmic vesicle membrane. The protein localises to the cytoplasm. It is found in the cell projection. Its subcellular location is the axon. It carries out the reaction beta-nicotinamide D-ribonucleotide + ATP + H(+) = diphosphate + NAD(+). The enzyme catalyses nicotinate beta-D-ribonucleotide + ATP + H(+) = deamido-NAD(+) + diphosphate. Its pathway is cofactor biosynthesis; NAD(+) biosynthesis; NAD(+) from nicotinamide D-ribonucleotide: step 1/1. It functions in the pathway cofactor biosynthesis; NAD(+) biosynthesis; deamido-NAD(+) from nicotinate D-ribonucleotide: step 1/1. Inhibited by P1-(adenosine-5')-P3-(nicotinamide-riboside-5')-triphosphate (Np3AD) and P1-(adenosine-5')-P4-(nicotinamide-riboside-5')-tetraphosphate (Np4AD). Its function is as follows. Nicotinamide/nicotinate-nucleotide adenylyltransferase that acts as an axon maintenance factor. Axon survival factor required for the maintenance of healthy axons: acts by delaying Wallerian axon degeneration, an evolutionarily conserved process that drives the loss of damaged axons. Catalyzes the formation of NAD(+) from nicotinamide mononucleotide (NMN) and ATP. Can also use the deamidated form; nicotinic acid mononucleotide (NaMN) as substrate but with a lower efficiency. Cannot use triazofurin monophosphate (TrMP) as substrate. Also catalyzes the reverse reaction, i.e. the pyrophosphorolytic cleavage of NAD(+). For the pyrophosphorolytic activity prefers NAD(+), NADH and NaAD as substrates and degrades nicotinic acid adenine dinucleotide phosphate (NHD) less effectively. Fails to cleave phosphorylated dinucleotides NADP(+), NADPH and NaADP(+). Also acts as an activator of ADP-ribosylation by supporting the catalytic activity of PARP16 and promoting mono-ADP-ribosylation of ribosomes by PARP16. May be involved in the maintenance of axonal integrity. The polypeptide is Nicotinamide/nicotinic acid mononucleotide adenylyltransferase 2 (NMNAT2) (Bos taurus (Bovine)).